A 171-amino-acid chain; its full sequence is Adenine phosphoribosyltransferase (171 aa).

Belongs to the purine/pyrimidine phosphoribosyltransferase family. Homodimer.

It is found in the cytoplasm. It catalyses the reaction AMP + diphosphate = 5-phospho-alpha-D-ribose 1-diphosphate + adenine. It participates in purine metabolism; AMP biosynthesis via salvage pathway; AMP from adenine: step 1/1. Its function is as follows. Catalyzes a salvage reaction resulting in the formation of AMP, that is energically less costly than de novo synthesis. This chain is Adenine phosphoribosyltransferase, found in Gloeobacter violaceus (strain ATCC 29082 / PCC 7421).